Consider the following 229-residue polypeptide: Uracil-DNA glycosylase (229 aa).

Asp64 functions as the Proton acceptor in the catalytic mechanism.

It belongs to the uracil-DNA glycosylase (UDG) superfamily. UNG family.

The protein resides in the cytoplasm. The catalysed reaction is Hydrolyzes single-stranded DNA or mismatched double-stranded DNA and polynucleotides, releasing free uracil.. Functionally, excises uracil residues from the DNA which can arise as a result of misincorporation of dUMP residues by DNA polymerase or due to deamination of cytosine. The protein is Uracil-DNA glycosylase of Escherichia coli (strain 55989 / EAEC).